Consider the following 171-residue polypeptide: Small ribosomal subunit protein uS13 (171 aa).

Polar residues predominate over residues 1–11 (MAKGSANNVKV). Disordered stretches follow at residues 1 to 24 (MAKG…EKKE) and 144 to 164 (EKGK…GLSI). Residues 144–158 (EKGKKVRGQRTRSNG) are compositionally biased toward basic residues.

It belongs to the universal ribosomal protein uS13 family. Part of the 30S ribosomal subunit. Forms a loose heterodimer with protein S19. Forms two bridges to the 50S subunit in the 70S ribosome.

Functionally, located at the top of the head of the 30S subunit, it contacts several helices of the 16S rRNA. In the 70S ribosome it contacts the 23S rRNA (bridge B1a) and protein L5 of the 50S subunit (bridge B1b), connecting the 2 subunits; these bridges are implicated in subunit movement. The sequence is that of Small ribosomal subunit protein uS13 from Thermoplasma acidophilum (strain ATCC 25905 / DSM 1728 / JCM 9062 / NBRC 15155 / AMRC-C165).